The chain runs to 342 residues: N-acetyl-gamma-glutamyl-phosphate reductase (342 aa).

Cys149 is a catalytic residue.

This sequence belongs to the NAGSA dehydrogenase family. Type 1 subfamily.

The protein localises to the cytoplasm. The catalysed reaction is N-acetyl-L-glutamate 5-semialdehyde + phosphate + NADP(+) = N-acetyl-L-glutamyl 5-phosphate + NADPH + H(+). It participates in amino-acid biosynthesis; L-arginine biosynthesis; N(2)-acetyl-L-ornithine from L-glutamate: step 3/4. In terms of biological role, catalyzes the NADPH-dependent reduction of N-acetyl-5-glutamyl phosphate to yield N-acetyl-L-glutamate 5-semialdehyde. The sequence is that of N-acetyl-gamma-glutamyl-phosphate reductase from Aromatoleum aromaticum (strain DSM 19018 / LMG 30748 / EbN1) (Azoarcus sp. (strain EbN1)).